The sequence spans 674 residues: Probable potassium transport system protein Kup (674 aa).

12 helical membrane-spanning segments follow: residues isoleucine 7–leucine 27, leucine 52–leucine 72, tryptophan 95–proline 115, leucine 145–isoleucine 165, phenylalanine 169–isoleucine 189, leucine 204–leucine 224, isoleucine 244–alanine 264, valine 291–isoleucine 311, isoleucine 342–phenylalanine 362, methionine 368–serine 388, valine 397–serine 417, and glycine 425–phenylalanine 445.

It belongs to the HAK/KUP transporter (TC 2.A.72) family.

It localises to the cell membrane. The enzyme catalyses K(+)(in) + H(+)(in) = K(+)(out) + H(+)(out). Its function is as follows. Transport of potassium into the cell. Likely operates as a K(+):H(+) symporter. This chain is Probable potassium transport system protein Kup, found in Ligilactobacillus salivarius (strain UCC118) (Lactobacillus salivarius).